The following is a 1123-amino-acid chain: Rabphilin-1 (1123 aa).

The span at 1–17 (MTKSTKLRHCKQKKKKP) shows a compositional bias: basic residues. Disordered regions lie at residues 1–56 (MTKS…GSRS) and 88–140 (SAHN…PSTH). The segment covering 36–46 (DAATTTSTTDA) has biased composition (low complexity). One can recognise a RabBD domain in the interval 215–341 (KAQTGSITAA…KKSGAWFYKE (127 aa)). The FYVE-type zinc-finger motif lies at 263-328 (GNGVTHCLLC…LCKICSEARE (66 aa)). Zn(2+) contacts are provided by Cys-269, Cys-272, Cys-288, Cys-291, Cys-296, Cys-300, Cys-320, and Cys-323. Composition is skewed to polar residues over residues 365 to 375 (PNASSAATPLS), 387 to 400 (TMPS…TTPK), 410 to 428 (PGLQ…GTRR), and 487 to 497 (ASSSDGESFVQ). Disordered regions lie at residues 365-710 (PNAS…VGSA), 737-779 (TSRA…LRTS), and 796-818 (HIVS…VPIP). The segment covering 531-541 (SRREANMERFS) has biased composition (basic and acidic residues). Positions 563 to 574 (ESRPSTRSTSPR) are enriched in low complexity. Polar residues-rich tracts occupy residues 605–632 (VVQS…QQQA) and 649–666 (PDRT…TSLV). A compositionally biased stretch (low complexity) spans 742 to 753 (SPLAASSSFLSS). Over residues 756–768 (DDTKQKNRRRDGV) the composition is skewed to basic and acidic residues. The segment covering 803–818 (TSSTTSNQNHTSVPIP) has biased composition (low complexity). C2 domains are found at residues 844–967 (SLGS…NLYL) and 984–1103 (DRGK…RQWI). Asp-875, Asp-881, Asp-936, Asp-938, Asp-943, Asp-1015, Asp-1021, Asp-1075, Asp-1077, and Asp-1083 together coordinate Ca(2+).

The cofactor is Ca(2+).

It localises to the synapse. In terms of biological role, rab-3 effector. The protein is Rabphilin-1 (rbf-1) of Caenorhabditis elegans.